Here is a 134-residue protein sequence, read N- to C-terminus: ATP synthase epsilon chain (134 aa).

This sequence belongs to the ATPase epsilon chain family. As to quaternary structure, F-type ATPases have 2 components, CF(1) - the catalytic core - and CF(0) - the membrane proton channel. CF(1) has five subunits: alpha(3), beta(3), gamma(1), delta(1), epsilon(1). CF(0) has three main subunits: a, b and c.

The protein resides in the cell membrane. Produces ATP from ADP in the presence of a proton gradient across the membrane. The polypeptide is ATP synthase epsilon chain (Alkaliphilus metalliredigens (strain QYMF)).